Here is a 150-residue protein sequence, read N- to C-terminus: Large ribosomal subunit protein bL9 (150 aa).

Belongs to the bacterial ribosomal protein bL9 family.

Its function is as follows. Binds to the 23S rRNA. The sequence is that of Large ribosomal subunit protein bL9 from Burkholderia mallei (strain NCTC 10247).